The primary structure comprises 177 residues: Interleukin-10 (177 aa).

Positions 1-19 (MPSSSAVLCCLVFLAGVAA) are cleaved as a signal peptide. 2 disulfide bridges follow: Cys-31-Cys-127 and Cys-81-Cys-133. N-linked (GlcNAc...) asparagine glycosylation occurs at Asn-135.

Belongs to the IL-10 family. Homodimer. Interacts with IL10RA and IL10RB.

It is found in the secreted. Functionally, major immune regulatory cytokine that acts on many cells of the immune system where it has profound anti-inflammatory functions, limiting excessive tissue disruption caused by inflammation. Mechanistically, IL10 binds to its heterotetrameric receptor comprising IL10RA and IL10RB leading to JAK1 and STAT2-mediated phosphorylation of STAT3. In turn, STAT3 translocates to the nucleus where it drives expression of anti-inflammatory mediators. Targets antigen-presenting cells (APCs) such as macrophages and monocytes and inhibits their release of pro-inflammatory cytokines including granulocyte-macrophage colony-stimulating factor /GM-CSF, granulocyte colony-stimulating factor/G-CSF, IL-1 alpha, IL-1 beta, IL-6, IL-8 and TNF-alpha. Also interferes with antigen presentation by reducing the expression of MHC-class II and co-stimulatory molecules, thereby inhibiting their ability to induce T cell activation. In addition, controls the inflammatory response of macrophages by reprogramming essential metabolic pathways including mTOR signaling. This chain is Interleukin-10 (IL10), found in Ovis aries (Sheep).